The sequence spans 184 residues: Inorganic pyrophosphatase (184 aa).

Residues Lys-19, Arg-33, and Tyr-45 each contribute to the substrate site. Mg(2+) is bound by residues Asp-55, Asp-60, and Asp-92. Tyr-129 contributes to the substrate binding site.

This sequence belongs to the PPase family. Homohexamer. Mg(2+) is required as a cofactor.

It localises to the cytoplasm. It carries out the reaction diphosphate + H2O = 2 phosphate + H(+). Its function is as follows. Catalyzes the hydrolysis of inorganic pyrophosphate (PPi) forming two phosphate ions. This chain is Inorganic pyrophosphatase, found in Mycoplasma genitalium (strain ATCC 33530 / DSM 19775 / NCTC 10195 / G37) (Mycoplasmoides genitalium).